Consider the following 361-residue polypeptide: Nuclear pore complex protein NUP43 (361 aa).

Residues 51 to 73 (IQSLDPNPRGNHNTNPLIESLSS) form a disordered region. 3 WD repeats span residues 132-173 (FHVG…YRKV), 177-215 (NGLV…EAVS), and 225-265 (KTSA…QPIV).

In terms of assembly, part of the nuclear pore complex (NPC). The NPC has an eight-fold symmetrical structure comprising a central transport channel and two rings, the cytoplasmic and nuclear rings, to which eight filaments are attached. The cytoplasmic filaments have loose ends, while the nuclear filaments are joined in a distal ring, forming a nuclear basket. NPCs are highly dynamic in configuration and composition, and can be devided in 3 subcomplexes, the NUP62 subcomplex, the NUP107-160 subcomplex and the NUP93 subcomplex, containing approximately 30 different nucleoporin proteins.

It is found in the nucleus envelope. It localises to the nucleus. The protein localises to the nuclear pore complex. The polypeptide is Nuclear pore complex protein NUP43 (Arabidopsis thaliana (Mouse-ear cress)).